Consider the following 256-residue polypeptide: Probable galactose dehydrogenase GalD (256 aa).

Residues 20 to 23, 71 to 72, and asparagine 98 contribute to the NAD(+) site; these read GGGS and DL. Position 150 (serine 150) interacts with substrate. The active-site Proton acceptor is the tyrosine 163. Residues 163 to 167 and isoleucine 196 each bind NAD(+); that span reads YSTAK.

The protein belongs to the short-chain dehydrogenases/reductases (SDR) family.

Involved in the degradation of galactose via the DeLey-Doudoroff pathway. Catalyzes the oxidation of galactose in the presence of NAD(+). Uses NAD(+) as a hydrogen acceptor more efficiently than NADP(+). The polypeptide is Probable galactose dehydrogenase GalD (galD) (Rhizobium meliloti (strain 1021) (Ensifer meliloti)).